We begin with the raw amino-acid sequence, 440 residues long: Transposon Ty1-JR2 Gag polyprotein (440 aa).

The segment covering 1–16 has biased composition (low complexity); that stretch reads MESQQLSQHSHISHGS. Disordered regions lie at residues 1–93, 126–173, and 352–440; these read MESQ…MMTQ, PQSQ…RPPP, and GSRN…PETY. Composition is skewed to polar residues over residues 48–60, 71–93, and 127–152; these read TKANSQQTTTPAS, SPQTAQSHSPQNGPYPQQCMMTQ, and QSQFPQYPSSVGTPLSTPSPESGNTF. A compositionally biased stretch (low complexity) spans 153–165; it reads TDSSSADSDMTST. The segment at 299–401 is RNA-binding; it reads NNGIHINNKV…NSKSKTARAH (103 aa). The span at 402–418 shows a compositional bias: low complexity; that stretch reads NVSTSNNSPSTDNDSIS. Phosphoserine is present on serine 416. The segment covering 419–428 has biased composition (polar residues); sequence KSTTEPIQLN. Basic and acidic residues predominate over residues 429 to 440; sequence NKHDLHLRPETY.

In terms of assembly, homotrimer.

It is found in the cytoplasm. Functionally, capsid protein (CA) is the structural component of the virus-like particle (VLP), forming the shell that encapsulates the retrotransposons dimeric RNA genome. The particles are assembled from trimer-clustered units and there are holes in the capsid shells that allow for the diffusion of macromolecules. CA also has nucleocapsid-like chaperone activity, promoting primer tRNA(i)-Met annealing to the multipartite primer-binding site (PBS), dimerization of Ty1 RNA and initiation of reverse transcription. The protein is Transposon Ty1-JR2 Gag polyprotein (TY1A-JR2) of Saccharomyces cerevisiae (strain ATCC 204508 / S288c) (Baker's yeast).